We begin with the raw amino-acid sequence, 71 residues long: Large ribosomal subunit protein uL29 (71 aa).

The protein belongs to the universal ribosomal protein uL29 family.

The polypeptide is Large ribosomal subunit protein uL29 (Rickettsia akari (strain Hartford)).